A 2522-amino-acid chain; its full sequence is Neurogenic locus notch homolog protein 1 (2522 aa).

The N-terminal stretch at 1-19 (MYRIGLLVLIWSLLGLAQG) is a signal peptide. 4 consecutive EGF-like domains span residues 20-57 (LRCT…ERCQ), 58-99 (YPNP…KVCL), 102-140 (VDNA…DSCQ), and 141-177 (QADP…ATCK). Over 20 to 1730 (LRCTQTAEMC…ETAKPPPPLY (1711 aa)) the chain is Extracellular. Intrachain disulfides connect Cys22–Cys35, Cys29–Cys45, Cys47–Cys56, Cys62–Cys74, Cys68–Cys87, Cys89–Cys98, Cys106–Cys117, Cys111–Cys128, Cys130–Cys139, Cys145–Cys156, Cys150–Cys165, Cys167–Cys176, Cys183–Cys194, Cys188–Cys203, Cys205–Cys214, Cys221–Cys232, Cys226–Cys242, Cys244–Cys253, Cys260–Cys271, Cys265–Cys280, Cys282–Cys291, Cys298–Cys311, Cys305–Cys320, Cys322–Cys331, Cys338–Cys349, Cys343–Cys358, Cys360–Cys369, Cys375–Cys386, Cys380–Cys397, Cys399–Cys408, Cys415–Cys428, Cys422–Cys437, and Cys439–Cys448. The EGF-like 5; calcium-binding domain occupies 179–215 (DINECSQNPCRNGGQCLNEFGSYRCNCQNRFTGRNCE). An EGF-like 6 domain is found at 217-254 (PYVPCNPSPCLNGGTCRQTDDTSYECTCLPGFSGQNCE). Thr231 carries an O-linked (Fuc...) threonine; alternate glycan. O-linked (GalNAc...) threonine; alternate glycosylation is present at Thr231. The region spanning 256 to 292 (NIDDCPSNNCRNGGTCVDGVNTYNCQCPPDWTGQYCT) is the EGF-like 7; calcium-binding domain. The region spanning 294-332 (DVDECQLMPNACQNGGTCHNTYGGYNCVCVNGWTGEDCS) is the EGF-like 8; calcium-binding domain. In terms of domain architecture, EGF-like 9; calcium-binding spans 334-370 (NIDDCANAACHSGATCHDRVASFFCECPHGRTGLLCH). Residues 371 to 409 (LDNACISNPCNEGSNCDTNPVNGKAICTCPPGYTGPACN) form the EGF-like 10 domain. The EGF-like 11; calcium-binding domain maps to 411–449 (DVDECSLGANPCEHGGRCTNTLGSFQCNCPQGYAGPRCE). Ca(2+) contacts are provided by Thr431 and Ser434. Ser434 carries O-linked (Glc...) serine glycosylation. Ca(2+)-binding residues include Asp451, Val452, and Glu454. Residues 451–487 (DVNECLSNPCQNDATCLDQIGEFQCICMPGYEGLYCE) form the EGF-like 12; calcium-binding domain. 3 disulfides stabilise this stretch: Cys455-Cys466, Cys460-Cys475, and Cys477-Cys486. The O-linked (Glc...) serine glycan is linked to Ser457. O-linked (Fuc...) threonine glycosylation occurs at Thr465. Ca(2+)-binding residues include Asp468 and Gln469. The Ca(2+) site is built by Asn489, Ile490, and Glu492. An EGF-like 13; calcium-binding domain is found at 489 to 525 (NIDECASNPCLHNGKCVDKINEFHCECPTGFNGNLCQ). Intrachain disulfides connect Cys493-Cys504, Cys498-Cys513, Cys515-Cys524, Cys531-Cys542, Cys536-Cys551, Cys553-Cys562, Cys569-Cys579, Cys574-Cys588, Cys590-Cys599, Cys606-Cys617, Cys611-Cys626, Cys628-Cys637, Cys644-Cys654, Cys649-Cys663, Cys665-Cys674, Cys681-Cys692, Cys686-Cys701, Cys703-Cys712, Cys719-Cys729, Cys724-Cys738, Cys740-Cys749, Cys756-Cys767, Cys761-Cys776, Cys778-Cys787, Cys794-Cys805, Cys799-Cys814, Cys816-Cys825, Cys832-Cys843, Cys837-Cys854, Cys856-Cys865, Cys872-Cys883, Cys877-Cys892, Cys894-Cys903, Cys910-Cys921, Cys915-Cys930, Cys932-Cys941, Cys948-Cys959, Cys953-Cys968, Cys970-Cys979, Cys986-Cys997, Cys991-Cys1006, Cys1008-Cys1017, Cys1024-Cys1035, Cys1029-Cys1044, Cys1046-Cys1055, Cys1062-Cys1073, Cys1067-Cys1082, Cys1084-Cys1093, Cys1100-Cys1121, Cys1115-Cys1130, Cys1132-Cys1141, Cys1148-Cys1159, Cys1153-Cys1168, Cys1170-Cys1179, Cys1186-Cys1197, Cys1191-Cys1206, Cys1208-Cys1217, Cys1224-Cys1243, Cys1237-Cys1252, Cys1254-Cys1263, Cys1270-Cys1283, Cys1275-Cys1292, Cys1294-Cys1303, Cys1310-Cys1321, Cys1315-Cys1333, Cys1335-Cys1344, Cys1351-Cys1362, Cys1356-Cys1371, Cys1373-Cys1382, Cys1390-Cys1401, Cys1395-Cys1412, Cys1414-Cys1423, Cys1447-Cys1470, Cys1452-Cys1465, and Cys1461-Cys1477. Ser495 carries O-linked (Glc...) serine glycosylation. Positions 506 and 507 each coordinate Ca(2+). An EGF-like 14; calcium-binding domain is found at 527–563 (DVDECASTPCKNGAKCLDGPNSYTCQCTEGFTGRHCE). Residues 565-600 (DINECIPDPCHYGTCKDGIATFTCLCRPGYTGRLCD) enclose the EGF-like 15; calcium-binding domain. The 37-residue stretch at 602 to 638 (DINECLSQPCQNGGQCTDRENGYICTCPKGTTGVNCE) folds into the EGF-like 16; calcium-binding domain. The region spanning 640–675 (NLDDCASNPCDYGKCIDKIDGYECTCEPGYTGKMCN) is the EGF-like 17; calcium-binding domain. The 37-residue stretch at 677-713 (NIDECASNPCRNGGTCKDKINGFTCVCPDGYHDHMCL) folds into the EGF-like 18; calcium-binding domain. An EGF-like 19; calcium-binding domain is found at 715-750 (EVNECNSNPCIHGTCHDGINGYKCDCDAGWSGSNCD). One can recognise an EGF-like 20; calcium-binding domain in the interval 752-788 (NNNECESNPCMNGGTCKDMTGAYICTCRAGFSGPNCQ). The EGF-like 21; calcium-binding domain maps to 790 to 826 (NINECASNPCLNRGTCIDDVAGYKCNCMLPYTGAICE). In terms of domain architecture, EGF-like 22 spans 828–866 (VLAPCSGSPCKNGGRCKESEDYETFSCECPPGWQGQTCE). Residues 868–904 (DMNECVNRPCRNGAMCQNTNGSYKCNCKPGYAGRHCE) enclose the EGF-like 23; calcium-binding domain. Residue Asn887 is glycosylated (N-linked (GlcNAc...) asparagine). The EGF-like 24; calcium-binding domain maps to 906–942 (DIDDCQPNPCHNGGSCSDGINMFFCNCPAGFRGPKCE). The EGF-like 25; calcium-binding domain maps to 944–980 (DINECASNPCKNGANCTDCVNSYTCTCQPGFSGIHCE). N-linked (GlcNAc...) asparagine glycosylation is present at Asn958. Residues 982 to 1018 (NTPDCTESSCFNGGTCIDGINTFSCQCPPGFTGNYCQ) enclose the EGF-like 26 domain. Residues 1020 to 1056 (DINECDSKPCLNGGTCQDSYGAYKCTCPQGYTGLNCQ) enclose the EGF-like 27; calcium-binding domain. EGF-like domains follow at residues 1058–1094 (LVRW…VYCD) and 1096–1142 (PSVS…SYCE). The EGF-like 30; calcium-binding domain occupies 1144–1180 (QVDECSPNPCQNGATCTDYLGGYSCECVAGYHGVNCS). Asn1178 carries N-linked (GlcNAc...) asparagine glycosylation. Residues 1182–1218 (EINECLSHPCHNGGTCIDLINTYKCSCPRGTQGVHCE) enclose the EGF-like 31; calcium-binding domain. In terms of domain architecture, EGF-like 32; calcium-binding spans 1220–1264 (NVDDCTPFYDSVSLEPKCFNNGKCFDRVGGYNCICPPGFVGERCE). EGF-like domains are found at residues 1266-1304 (DVNE…RRCD), 1306-1345 (VVDG…ATCE), 1347-1383 (DART…ATCQ), and 1386-1424 (VVSP…LFCH). Thr1400 carries an O-linked (Fuc...) threonine; alternate glycan. A glycan (O-linked (GalNAc...) threonine; alternate) is linked at Thr1400. LNR repeat units follow at residues 1447–1487 (CENE…PWKN), 1488–1529 (CTQS…CNPL), and 1530–1564 (YDQY…NMPE). Ca(2+)-binding residues include Asn1458, Asp1473, and Asp1476. A glycan (N-linked (GlcNAc...) asparagine) is linked at Asn1487. Cystine bridges form between Cys1488–Cys1512, Cys1494–Cys1507, Cys1503–Cys1519, Cys1534–Cys1547, and Cys1543–Cys1559. Position 1500 (Asp1500) interacts with Ca(2+). Asn1508 carries N-linked (GlcNAc...) asparagine glycosylation. Positions 1515, 1518, 1540, 1555, and 1558 each coordinate Ca(2+). The N-linked (GlcNAc...) asparagine glycan is linked to Asn1584. A helical transmembrane segment spans residues 1731–1751 (AMFSMLVIPLLIIFVIMVVIV). The Cytoplasmic portion of the chain corresponds to 1752–2522 (NKKRRREHGQ…QRTHIPEAFK (771 aa)). ANK repeat units lie at residues 1877–1920 (DGFT…QLHN), 1925–1954 (TGET…DANV), 1958–1988 (MGRT…DLDA), 1992–2021 (DGTT…DVNA), 2025–2054 (FGKS…NKDM), and 2058–2087 (KEET…NRDI). 3 disordered regions span residues 2146 to 2229 (MKPS…MPLN), 2365 to 2404 (LMQA…PFCS), and 2449 to 2522 (LTPP…EAFK). The span at 2184–2200 (SLLDSGSSGVLSPVDSL) shows a compositional bias: low complexity. Over residues 2218–2229 (SPFQQSPSMPLN) the composition is skewed to polar residues. Over residues 2365 to 2390 (LMQAQQMQQQQNLQLHQSVQQQQHQN) the composition is skewed to low complexity. 2 stretches are compositionally biased toward polar residues: residues 2391–2404 (SNAT…PFCS) and 2449–2469 (LTPP…SHQL). Positions 2479–2494 (PSPESPDQWSSSSPHS) are enriched in low complexity. Positions 2495 to 2514 (NMSDWSEGISSPPTSMQPQR) are enriched in polar residues.

Belongs to the NOTCH family. Post-translationally, O-glycosylated on the EGF-like domains. Contains both O-linked fucose and O-linked glucose. O-linked glycosylation by galnt11 is involved in determination of left/right symmetry: glycosylation promotes activation of notch1, possibly by promoting cleavage by adam17, modulating the balance between motile and immotile (sensory) cilia at the left-right organiser (LRO). Synthesized in the endoplasmic reticulum as an inactive form which is proteolytically cleaved by a furin-like convertase in the trans-Golgi network before it reaches the plasma membrane to yield an active, ligand-accessible form. Cleavage results in a C-terminal fragment N(TM) and a N-terminal fragment N(EC). Following ligand binding, it is cleaved by adam17 to yield a membrane-associated intermediate fragment called notch extracellular truncation (NEXT). Following endocytosis, this fragment is then cleaved by presenilin dependent gamma-secretase to release a Notch-derived peptide containing the intracellular domain (NICD) from the membrane.

It is found in the cell membrane. The protein resides in the nucleus. Its function is as follows. Functions as a receptor for membrane-bound ligands Jagged-1 (JAG1), Jagged-2 (JAG2) and Delta-1 (DLL1) to regulate cell-fate determination. Upon ligand activation through the released notch intracellular domain (NICD) it forms a transcriptional activator complex with RBPJ/RBPSUH and activates genes of the enhancer of split locus. Affects the implementation of differentiation, proliferation and apoptotic programs. Involved in angiogenesis; negatively regulates endothelial cell proliferation and migration and angiogenic sprouting. Involved in the maturation of both CD4(+) and CD8(+) cells in the thymus. Important for follicular differentiation and possibly cell fate selection within the follicle. During cerebellar development, functions as a receptor for neuronal DNER and is involved in the differentiation of Bergmann glia. Represses neuronal and myogenic differentiation. May play an essential role in postimplantation development, probably in some aspect of cell specification and/or differentiation. May be involved in mesoderm development, somite formation and neurogenesis. Involved in determination of left/right symmetry by modulating the balance between motile and immotile (sensory) cilia at the left-right organiser (LRO). This Xenopus tropicalis (Western clawed frog) protein is Neurogenic locus notch homolog protein 1 (notch1).